Consider the following 419-residue polypeptide: LWamide neuropeptides (419 aa).

An N-terminal signal peptide occupies residues Met1–Ala27. The interval Ala27 to Asn48 is disordered. Residues Lys28–Gln104 constitute a propeptide that is removed on maturation. Trp110 carries the tryptophan amide modification. Positions Glu113–Ala140 are excised as a propeptide. A compositionally biased stretch (basic and acidic residues) spans Arg120–Gln132. Positions Arg120–Asp332 are disordered. Trp146 bears the Tryptophan amide mark. Positions Asp149 to Ala150 are excised as a propeptide. Trp156 bears the Tryptophan amide mark. A propeptide spanning residues Asp159–Ala160 is cleaved from the precursor. Residue Trp166 is modified to Tryptophan amide. The propeptide occupies Asp169–Ala170. The residue at position 176 (Trp176) is a Tryptophan amide. A propeptide spanning residues Asp179–Ala180 is cleaved from the precursor. A Tryptophan amide modification is found at Trp186. Positions Asp189 to Ala190 are excised as a propeptide. A Tryptophan amide modification is found at Trp196. The propeptide occupies Asp199–Ala200. Trp206 is subject to Tryptophan amide. Positions Asp209–Ala210 are excised as a propeptide. Trp216 is modified (tryptophan amide). The propeptide at Gly218–Ala220 is seems to have a sequencing error or a mutation in position 218; Gly instead of Arg. A Tryptophan amide modification is found at Trp226. Residues Asp229–Ala230 constitute a propeptide that is removed on maturation. At Trp236 the chain carries Tryptophan amide. A propeptide spanning residues Asp239–Ala240 is cleaved from the precursor. The residue at position 246 (Trp246) is a Tryptophan amide. Positions Asp249–Ala250 are excised as a propeptide. A Tryptophan amide modification is found at Trp256. Residues Asp259 to Ala260 constitute a propeptide that is removed on maturation. Trp266 is subject to Tryptophan amide. The propeptide occupies Asp269–Ala270. At Trp276 the chain carries Tryptophan amide. Positions Asp279–Thr280 are excised as a propeptide. Trp286 bears the Tryptophan amide mark. Positions Asp289–Ala290 are excised as a propeptide. Position 296 is a tryptophan amide (Trp296). 2 consecutive propeptides follow at residues Asp299–Ala300 and Asp309–Ala320. Trp326 carries the post-translational modification Tryptophan amide. Residues Gln329–Phe419 constitute a propeptide that is removed on maturation.

It belongs to the LWamide neuropeptide family. As to expression, in planula larvae, expressed in a narrow ring of ectodermal neurosensory cells around the widest circumference at the anterior of the larvae. In primary polyps, expression is confined to endodermal cells of the hypostome. In mature polyps, expression is strong in the epidermis from the tentacle level to the base of the polyp and weak in the gastrodermal cells in the apical hypostome.

It localises to the secreted. Functionally, LWamide peptides may be involved in induction of metamorphosis. This Hydractinia echinata (Snail fur) protein is LWamide neuropeptides.